A 162-amino-acid polypeptide reads, in one-letter code: Cyclic pyranopterin monophosphate synthase (162 aa).

Residues 75 to 77 and 113 to 114 each bind substrate; these read LCH and ME. Aspartate 128 is a catalytic residue.

It belongs to the MoaC family. Homohexamer; trimer of dimers.

The enzyme catalyses (8S)-3',8-cyclo-7,8-dihydroguanosine 5'-triphosphate = cyclic pyranopterin phosphate + diphosphate. It participates in cofactor biosynthesis; molybdopterin biosynthesis. Functionally, catalyzes the conversion of (8S)-3',8-cyclo-7,8-dihydroguanosine 5'-triphosphate to cyclic pyranopterin monophosphate (cPMP). The chain is Cyclic pyranopterin monophosphate synthase from Burkholderia vietnamiensis (strain G4 / LMG 22486) (Burkholderia cepacia (strain R1808)).